Here is a 100-residue protein sequence, read N- to C-terminus: MGALTKAEMAERLYEELGLNKREAKELVELFFEEIRHALEDNEQVKLSGFGNFDLRDKRQRPGRNPKTGEEIPITARRVVTFRPGQKLKARVEAYAGTKP.

The interval 53-72 is disordered; the sequence is FDLRDKRQRPGRNPKTGEEI.

This sequence belongs to the bacterial histone-like protein family. In terms of assembly, heterodimer of an alpha and a beta chain.

Functionally, this protein is one of the two subunits of integration host factor, a specific DNA-binding protein that functions in genetic recombination as well as in transcriptional and translational control. This chain is Integration host factor subunit alpha, found in Pseudomonas entomophila (strain L48).